Here is a 192-residue protein sequence, read N- to C-terminus: Erythropoietin (192 aa).

A signal peptide spans Met1 to Gly25. 2 disulfide bridges follow: Cys32–Cys187 and Cys54–Cys58. A glycan (N-linked (GlcNAc...) asparagine) is linked at Asn49. 2 N-linked (GlcNAc...) asparagine glycosylation sites follow: Asn63 and Asn108.

It belongs to the EPO/TPO family. In terms of tissue distribution, produced by kidney or liver of adult mammals and by liver of fetal or neonatal mammals.

It localises to the secreted. Its function is as follows. Hormone involved in the regulation of erythrocyte proliferation and differentiation and the maintenance of a physiological level of circulating erythrocyte mass. Binds to EPOR leading to EPOR dimerization and JAK2 activation thereby activating specific downstream effectors, including STAT1 and STAT3. The protein is Erythropoietin (EPO) of Bos taurus (Bovine).